The sequence spans 317 residues: Protoheme IX farnesyltransferase (317 aa).

A run of 9 helical transmembrane segments spans residues 28–48 (IIPL…HGHI), 53–73 (LLIT…LNCI), 101–121 (LIFA…FVNL), 122–142 (LSAC…THWL), 150–170 (IVIG…AVTG), 178–198 (ILFA…ALMI), 223–243 (IWIY…PFQA), 246–266 (LFYA…AWEL), and 282–302 (YSIL…LPAV).

The protein belongs to the UbiA prenyltransferase family. Protoheme IX farnesyltransferase subfamily.

The protein resides in the cell inner membrane. The enzyme catalyses heme b + (2E,6E)-farnesyl diphosphate + H2O = Fe(II)-heme o + diphosphate. It participates in porphyrin-containing compound metabolism; heme O biosynthesis; heme O from protoheme: step 1/1. Its function is as follows. Converts heme B (protoheme IX) to heme O by substitution of the vinyl group on carbon 2 of heme B porphyrin ring with a hydroxyethyl farnesyl side group. In Picosynechococcus sp. (strain ATCC 27264 / PCC 7002 / PR-6) (Agmenellum quadruplicatum), this protein is Protoheme IX farnesyltransferase.